The sequence spans 264 residues: Undecaprenyl-diphosphatase (264 aa).

Helical transmembrane passes span 34 to 54 (LLNL…MGSI), 75 to 95 (LLYL…LYII), 104 to 124 (YDPS…GLYI), 137 to 157 (LSLK…LPGV), 180 to 200 (YSYL…ILFS), 207 to 227 (VISL…FIIG), and 243 to 263 (IYII…LTIL).

The protein belongs to the UppP family.

The protein localises to the cell membrane. It catalyses the reaction di-trans,octa-cis-undecaprenyl diphosphate + H2O = di-trans,octa-cis-undecaprenyl phosphate + phosphate + H(+). Its function is as follows. Catalyzes the dephosphorylation of undecaprenyl diphosphate (UPP). The chain is Undecaprenyl-diphosphatase from Sulfurisphaera tokodaii (strain DSM 16993 / JCM 10545 / NBRC 100140 / 7) (Sulfolobus tokodaii).